The primary structure comprises 161 residues: E3 ubiquitin ligase complex SCF subunit sconC (161 aa).

Residues 102-161 (ILAANYLDIKPLLDIGCKTVANMIKGKSPEEIRKTFNIQNDFTPEEEDQIRRENEWAEDR) form an interaction with the F-box domain of F-box proteins region.

It belongs to the SKP1 family. In terms of assembly, component of the SCF (SKP1-CUL1-F-box protein) E3 ubiquitin ligase complexes.

It functions in the pathway protein modification; protein ubiquitination. Its function is as follows. Essential component of the SCF (SKP1-CUL1-F-box protein) E3 ubiquitin ligase complexes, which mediate the ubiquitination and subsequent proteasomal degradation of target proteins. Controls sulfur metabolite repression, probably by mediating the inactivation or degradation of the metR transcription factor. The chain is E3 ubiquitin ligase complex SCF subunit sconC (sconC) from Emericella nidulans (strain FGSC A4 / ATCC 38163 / CBS 112.46 / NRRL 194 / M139) (Aspergillus nidulans).